We begin with the raw amino-acid sequence, 151 residues long: Transcriptional regulator MraZ (151 aa).

SpoVT-AbrB domains are found at residues 5–52 (ANAV…PLDE) and 81–124 (AVDL…DEDA).

It belongs to the MraZ family. Forms oligomers.

The protein resides in the cytoplasm. The protein localises to the nucleoid. The chain is Transcriptional regulator MraZ from Pseudomonas putida (strain ATCC 700007 / DSM 6899 / JCM 31910 / BCRC 17059 / LMG 24140 / F1).